Consider the following 1387-residue polypeptide: DNA-directed RNA polymerase subunit beta (1387 aa).

The protein belongs to the RNA polymerase beta chain family. The RNAP catalytic core consists of 2 alpha, 1 beta, 1 beta' and 1 omega subunit. When a sigma factor is associated with the core the holoenzyme is formed, which can initiate transcription.

It carries out the reaction RNA(n) + a ribonucleoside 5'-triphosphate = RNA(n+1) + diphosphate. Functionally, DNA-dependent RNA polymerase catalyzes the transcription of DNA into RNA using the four ribonucleoside triphosphates as substrates. In Xanthomonas campestris pv. campestris (strain ATCC 33913 / DSM 3586 / NCPPB 528 / LMG 568 / P 25), this protein is DNA-directed RNA polymerase subunit beta.